Reading from the N-terminus, the 259-residue chain is Triosephosphate isomerase (259 aa).

Residue 10–12 (NWK) coordinates substrate. H102 acts as the Electrophile in catalysis. E174 (proton acceptor) is an active-site residue. Residues G180, S220, and 241-242 (GG) contribute to the substrate site.

Belongs to the triosephosphate isomerase family. As to quaternary structure, homodimer.

The protein resides in the cytoplasm. The catalysed reaction is D-glyceraldehyde 3-phosphate = dihydroxyacetone phosphate. It functions in the pathway carbohydrate biosynthesis; gluconeogenesis. It participates in carbohydrate degradation; glycolysis; D-glyceraldehyde 3-phosphate from glycerone phosphate: step 1/1. Its function is as follows. Involved in the gluconeogenesis. Catalyzes stereospecifically the conversion of dihydroxyacetone phosphate (DHAP) to D-glyceraldehyde-3-phosphate (G3P). The chain is Triosephosphate isomerase from Cutibacterium acnes (strain DSM 16379 / KPA171202) (Propionibacterium acnes).